The sequence spans 249 residues: Triosephosphate isomerase (249 aa).

8–10 lines the substrate pocket; it reads NWK. The active-site Electrophile is His95. The active-site Proton acceptor is the Glu163. Substrate contacts are provided by Gly169 and Ser209.

Belongs to the triosephosphate isomerase family. In terms of assembly, homodimer.

The protein localises to the cytoplasm. The catalysed reaction is D-glyceraldehyde 3-phosphate = dihydroxyacetone phosphate. Its pathway is carbohydrate biosynthesis; gluconeogenesis. It participates in carbohydrate degradation; glycolysis; D-glyceraldehyde 3-phosphate from glycerone phosphate: step 1/1. Functionally, involved in the gluconeogenesis. Catalyzes stereospecifically the conversion of dihydroxyacetone phosphate (DHAP) to D-glyceraldehyde-3-phosphate (G3P). The chain is Triosephosphate isomerase from Orientia tsutsugamushi (strain Ikeda) (Rickettsia tsutsugamushi).